The sequence spans 78 residues: MKLTCMMIVAVLFLTAWTFATADDSGNGLENLFSNAHHQMKNPEASKLNKRWCKQSGEMCNLLDQNCCDGYCIVLVCT.

Positions 1–22 (MKLTCMMIVAVLFLTAWTFATA) are cleaved as a signal peptide. A propeptide spanning residues 23-49 (DDSGNGLENLFSNAHHQMKNPEASKLN) is cleaved from the precursor. Intrachain disulfides connect Cys53–Cys68, Cys60–Cys72, and Cys67–Cys77. Position 59 is a methionine sulfoxide; partial (Met59).

This sequence belongs to the conotoxin O1 superfamily. As to expression, expressed by the venom duct. Is present in all duct parts with a highest content in part 4 (distal part near the pharynx).

Its subcellular location is the secreted. In terms of biological role, delta-conotoxins bind to site 6 of voltage-gated sodium channels (Nav) and inhibit the inactivation process. Binding of this toxin is strongly calcium-dependent but not voltage-dependent. The binding site is most likely on the extracellular side of the sodium channel. Binds receptor sites on both mollusk and rat central nervous system, but despite its high affinity binding to rat sodium channel, it has no functional effect in vivo and in vitro on it. Also has no effect on Gambusia fish. Is important in mollusk for the paralysis of the prey. Upon injection of the peptide, a subordinate lobster assumes an exaggerated dominant posture (of a 'King-Kong' lobster!). The chain is Delta-conotoxin TxVIA from Conus textile (Cloth-of-gold cone).